The primary structure comprises 332 residues: L-lactate dehydrogenase A chain (332 aa).

NAD(+)-binding positions include 29–57 (GMVG…MEDK) and Arg99. The substrate site is built by Arg106, Asn138, and Arg169. Asn138 provides a ligand contact to NAD(+). His193 functions as the Proton acceptor in the catalytic mechanism. Thr248 contacts substrate.

This sequence belongs to the LDH/MDH superfamily. LDH family. Homotetramer.

It localises to the cytoplasm. The catalysed reaction is (S)-lactate + NAD(+) = pyruvate + NADH + H(+). It functions in the pathway fermentation; pyruvate fermentation to lactate; (S)-lactate from pyruvate: step 1/1. Its function is as follows. Interconverts simultaneously and stereospecifically pyruvate and lactate with concomitant interconversion of NADH and NAD(+). The protein is L-lactate dehydrogenase A chain (ldha) of Gillichthys seta (Shortjaw mudsucker).